Here is a 156-residue protein sequence, read N- to C-terminus: Small ribosomal subunit protein uS7 (156 aa).

Belongs to the universal ribosomal protein uS7 family. As to quaternary structure, part of the 30S ribosomal subunit. Contacts proteins S9 and S11.

Functionally, one of the primary rRNA binding proteins, it binds directly to 16S rRNA where it nucleates assembly of the head domain of the 30S subunit. Is located at the subunit interface close to the decoding center, probably blocks exit of the E-site tRNA. The chain is Small ribosomal subunit protein uS7 from Thermosynechococcus vestitus (strain NIES-2133 / IAM M-273 / BP-1).